The primary structure comprises 1345 residues: Rho guanine nucleotide exchange factor 10 (1345 aa).

Disordered stretches follow at residues 1–84 and 99–120; these read MEQG…PAKL and TPLQ…GVGL. Residues 22–39 are compositionally biased toward acidic residues; it reads NNEEEGELFDFDSGDEVP. The segment covering 40–54 has biased composition (basic and acidic residues); sequence EADRQVPSADDRTRG. The segment covering 102–111 has biased composition (polar residues); sequence QEDQPSSPDA. S157 is subject to Phosphoserine. Disordered regions lie at residues 158–195 and 207–273; these read VEEE…SALA and MENP…IPRS. Positions 171-191 are enriched in polar residues; sequence QCNSLSSEDLPHSSEQGSQEG. The segment covering 224–239 has biased composition (acidic residues); the sequence is DSEPDEMIYDDVENGE. Residues 242-255 show a composition bias toward low complexity; the sequence is GNSSPEYGWSSSEF. A coiled-coil region spans residues 307–335; that stretch reads GAMEIQQAKQRQERKMQKLMKAAKEGTKD. At S355 the chain carries Phosphoserine. One can recognise a DH domain in the interval 397-584; sequence VRRYILGSIV…ETLAEKLNER (188 aa). Disordered stretches follow at residues 1202 to 1237 and 1253 to 1306; these read DRAR…QPDT and KNDL…RASS. Residues 1256 to 1271 show a composition bias toward low complexity; that stretch reads LSSSSGSLNLSHGSSS. A Phosphoserine modification is found at S1262. Q1314 bears the N5-methylglutamine mark.

Methylated at Gln-1314 by N6AMT1. In terms of tissue distribution, ubiquitously expressed.

May play a role in developmental myelination of peripheral nerves. The protein is Rho guanine nucleotide exchange factor 10 (Arhgef10) of Mus musculus (Mouse).